The primary structure comprises 835 residues: Protein translocase subunit SecA (835 aa).

Residues Gln-85, 103–107 (GEGKT), and Asp-492 each bind ATP. Zn(2+)-binding residues include Cys-819, Cys-821, Cys-830, and Cys-831.

This sequence belongs to the SecA family. Monomer and homodimer. Part of the essential Sec protein translocation apparatus which comprises SecA, SecYEG and auxiliary proteins SecDF. Other proteins may also be involved. Zn(2+) is required as a cofactor.

It localises to the cell membrane. It is found in the cytoplasm. It catalyses the reaction ATP + H2O + cellular proteinSide 1 = ADP + phosphate + cellular proteinSide 2.. Part of the Sec protein translocase complex. Interacts with the SecYEG preprotein conducting channel. Has a central role in coupling the hydrolysis of ATP to the transfer of proteins into and across the cell membrane, serving as an ATP-driven molecular motor driving the stepwise translocation of polypeptide chains across the membrane. In Clostridium botulinum (strain Loch Maree / Type A3), this protein is Protein translocase subunit SecA.